The primary structure comprises 286 residues: NADPH-dependent 7-cyano-7-deazaguanine reductase (286 aa).

A substrate-binding site is contributed by 92–94 (IES). 94–95 (SK) lines the NADPH pocket. Cys-194 (thioimide intermediate) is an active-site residue. The Proton donor role is filled by Asp-201. 233 to 234 (HE) contacts substrate. 262 to 263 (RG) contacts NADPH.

This sequence belongs to the GTP cyclohydrolase I family. QueF type 2 subfamily. In terms of assembly, homodimer.

It localises to the cytoplasm. The enzyme catalyses 7-aminomethyl-7-carbaguanine + 2 NADP(+) = 7-cyano-7-deazaguanine + 2 NADPH + 3 H(+). Its pathway is tRNA modification; tRNA-queuosine biosynthesis. Functionally, catalyzes the NADPH-dependent reduction of 7-cyano-7-deazaguanine (preQ0) to 7-aminomethyl-7-deazaguanine (preQ1). This Shewanella sp. (strain MR-7) protein is NADPH-dependent 7-cyano-7-deazaguanine reductase.